The primary structure comprises 220 residues: Uracil-DNA glycosylase (220 aa).

D61 functions as the Proton acceptor in the catalytic mechanism.

Belongs to the uracil-DNA glycosylase (UDG) superfamily. UNG family.

The protein resides in the cytoplasm. The catalysed reaction is Hydrolyzes single-stranded DNA or mismatched double-stranded DNA and polynucleotides, releasing free uracil.. Functionally, excises uracil residues from the DNA which can arise as a result of misincorporation of dUMP residues by DNA polymerase or due to deamination of cytosine. The chain is Uracil-DNA glycosylase from Pseudoalteromonas translucida (strain TAC 125).